Reading from the N-terminus, the 751-residue chain is ATP-dependent DNA helicase Hel308 (751 aa).

ATP is bound by residues Gln20 and 39–46; that span reads IPTASGKT. The region spanning 26–196 is the Helicase ATP-binding domain; sequence EGLLDKSKNF…WLNAKLVTDE (171 aa). The short motif at 143 to 146 is the DEAH box element; the sequence is DEIH. In terms of domain architecture, Helicase C-terminal spans 235–435; that stretch reads NLTDLIVDSV…VLRVHILGLI (201 aa).

Belongs to the helicase family. Hel308 subfamily. In terms of assembly, monomer.

The catalysed reaction is Couples ATP hydrolysis with the unwinding of duplex DNA by translocating in the 3'-5' direction.. The enzyme catalyses ATP + H2O = ADP + phosphate + H(+). Its function is as follows. DNA-dependent ATPase and 3'-5' DNA helicase that may be involved in repair of stalled replication forks. The polypeptide is ATP-dependent DNA helicase Hel308 (Methanococcus vannielii (strain ATCC 35089 / DSM 1224 / JCM 13029 / OCM 148 / SB)).